Here is a 373-residue protein sequence, read N- to C-terminus: 3-dehydroquinate synthase (373 aa).

NAD(+) contacts are provided by residues 107-111, 131-132, Lys144, and Lys153; these read GVIGD and TS. 3 residues coordinate Zn(2+): Glu186, His249, and His267.

The protein belongs to the sugar phosphate cyclases superfamily. Dehydroquinate synthase family. It depends on Co(2+) as a cofactor. Zn(2+) is required as a cofactor. NAD(+) serves as cofactor.

It is found in the cytoplasm. It carries out the reaction 7-phospho-2-dehydro-3-deoxy-D-arabino-heptonate = 3-dehydroquinate + phosphate. It participates in metabolic intermediate biosynthesis; chorismate biosynthesis; chorismate from D-erythrose 4-phosphate and phosphoenolpyruvate: step 2/7. Its function is as follows. Catalyzes the conversion of 3-deoxy-D-arabino-heptulosonate 7-phosphate (DAHP) to dehydroquinate (DHQ). The polypeptide is 3-dehydroquinate synthase (Ruegeria sp. (strain TM1040) (Silicibacter sp.)).